Here is an 86-residue protein sequence, read N- to C-terminus: Small ribosomal subunit protein bS20 (86 aa).

The tract at residues 1-27 (MANNKSAKKRAIQAEKRRQHNASRRSM) is disordered.

It belongs to the bacterial ribosomal protein bS20 family.

Functionally, binds directly to 16S ribosomal RNA. The chain is Small ribosomal subunit protein bS20 from Vibrio cholerae serotype O1 (strain ATCC 39541 / Classical Ogawa 395 / O395).